A 40-amino-acid polypeptide reads, in one-letter code: U1-ectatotoxin-Eb1a subunit A (40 aa).

This sequence belongs to the ectatomin family. Ectatomin-Eq subfamily. Heterodimer of subunits A and B; disulfide-linked. Expressed by the venom gland.

It localises to the secreted. The protein localises to the target cell membrane. This chain is U1-ectatotoxin-Eb1a subunit A, found in Ectatomma brunneum (Ant).